A 200-amino-acid chain; its full sequence is Pyridoxine/pyridoxamine 5'-phosphate oxidase (200 aa).

Residues 48–53 (RMVLLK), 63–64 (YT), K70, and Q92 each bind FMN. K53 serves as a coordination point for substrate. The substrate site is built by Y110, R114, and S118. FMN-binding positions include 127–128 (QS) and W171. Substrate is bound at residue 177–179 (RLH). R181 contacts FMN.

Belongs to the pyridoxamine 5'-phosphate oxidase family. Homodimer. Requires FMN as cofactor.

It carries out the reaction pyridoxamine 5'-phosphate + O2 + H2O = pyridoxal 5'-phosphate + H2O2 + NH4(+). It catalyses the reaction pyridoxine 5'-phosphate + O2 = pyridoxal 5'-phosphate + H2O2. It participates in cofactor metabolism; pyridoxal 5'-phosphate salvage; pyridoxal 5'-phosphate from pyridoxamine 5'-phosphate: step 1/1. It functions in the pathway cofactor metabolism; pyridoxal 5'-phosphate salvage; pyridoxal 5'-phosphate from pyridoxine 5'-phosphate: step 1/1. In terms of biological role, catalyzes the oxidation of either pyridoxine 5'-phosphate (PNP) or pyridoxamine 5'-phosphate (PMP) into pyridoxal 5'-phosphate (PLP). The protein is Pyridoxine/pyridoxamine 5'-phosphate oxidase of Cereibacter sphaeroides (strain ATCC 17029 / ATH 2.4.9) (Rhodobacter sphaeroides).